Consider the following 1402-residue polypeptide: Transcription elongation factor spt-6 (1402 aa).

Residues 1–199 (MSNSMRDLID…PKDRGLNIDT (199 aa)) are disordered. 4 stretches are compositionally biased toward acidic residues: residues 10–28 (DGEA…DEEA), 40–52 (DSSE…EDEE), 62–75 (IVDE…EDSD), and 90–102 (EEEE…DLDL). Basic and acidic residues predominate over residues 123-135 (HRDDHRPTERRGL). Residues 161–176 (DEFDDFIEDDYPEDDE) show a composition bias toward acidic residues. Residues 177 to 199 (ERRHREEDEEVARPKDRGLNIDT) show a composition bias toward basic and acidic residues. Residues 1094 to 1161 (GMIVAANVRV…KEFVSKLSMR (68 aa)) form the S1 motif domain. Positions 1209-1306 (PLFKPFNSTQ…KKVDELMQCD (98 aa)) constitute an SH2 domain.

The protein belongs to the SPT6 family.

It localises to the nucleus. Its subcellular location is the chromosome. Functionally, histone H3-H4 chaperone that plays a role in maintenance of chromatin structure during RNA polymerase II transcription elongation thereby repressing transcription initiation from cryptic promoters. Mediates the reassembly of nucleosomes onto the promoters of at least a selected set of genes during repression; the nucleosome reassembly is essential for transcriptional repression. Essential for viability. This is Transcription elongation factor spt-6 (spt-6) from Neurospora crassa (strain ATCC 24698 / 74-OR23-1A / CBS 708.71 / DSM 1257 / FGSC 987).